The following is a 253-amino-acid chain: uncharacterized protein (253 aa).

Residues 211–241 (TTRRKRYREDRDSGEDLGAESKRGNGSVRYT) are disordered.

This is an uncharacterized protein from Ictalurid herpesvirus 1 (strain Auburn) (IcHV-1).